The chain runs to 147 residues: Prefoldin subunit alpha (147 aa).

It belongs to the prefoldin subunit alpha family. Heterohexamer of two alpha and four beta subunits.

Its subcellular location is the cytoplasm. In terms of biological role, molecular chaperone capable of stabilizing a range of proteins. Seems to fulfill an ATP-independent, HSP70-like function in archaeal de novo protein folding. The chain is Prefoldin subunit alpha (pfdA) from Saccharolobus solfataricus (strain ATCC 35092 / DSM 1617 / JCM 11322 / P2) (Sulfolobus solfataricus).